A 176-amino-acid polypeptide reads, in one-letter code: Dual-action ribosomal maturation protein DarP (176 aa).

It belongs to the DarP family.

It is found in the cytoplasm. Member of a network of 50S ribosomal subunit biogenesis factors which assembles along the 30S-50S interface, preventing incorrect 23S rRNA structures from forming. Promotes peptidyl transferase center (PTC) maturation. This chain is Dual-action ribosomal maturation protein DarP, found in Haemophilus ducreyi (strain 35000HP / ATCC 700724).